A 254-amino-acid chain; its full sequence is Cell division protein FtsQ (254 aa).

The Cytoplasmic segment spans residues 1–27 (MNILKRKTPQNIRFGEQKPKYYFHIRA). A helical membrane pass occupies residues 28 to 48 (FAVLLGVFFLLGVYFNWQSIL). The Periplasmic segment spans residues 49–254 (EKMDDKPISA…AGAAVGMVDR (206 aa)). Residues 54-124 (KPISAFALVG…NRLSIWVSEY (71 aa)) form the POTRA domain.

It belongs to the FtsQ/DivIB family. FtsQ subfamily. In terms of assembly, part of a complex composed of FtsB, FtsL and FtsQ.

The protein resides in the cell inner membrane. Its function is as follows. Essential cell division protein. May link together the upstream cell division proteins, which are predominantly cytoplasmic, with the downstream cell division proteins, which are predominantly periplasmic. May control correct divisome assembly. This chain is Cell division protein FtsQ, found in Haemophilus influenzae (strain ATCC 51907 / DSM 11121 / KW20 / Rd).